The following is a 514-amino-acid chain: Glucose-1-phosphate adenylyltransferase small subunit 2, chloroplastic/amyloplastic/cytosolic (514 aa).

Residues 1-64 constitute a chloroplast transit peptide; sequence MAMAAAMGVA…RRRPLVFSPR (64 aa). The tract at residues 35 to 74 is disordered; sequence RPRRPRGVASSSSSSSSAGRRRRPLVFSPRAVSDSKSSQT. Residues 41-52 show a composition bias toward low complexity; it reads GVASSSSSSSSA.

It belongs to the bacterial/plant glucose-1-phosphate adenylyltransferase family. In terms of assembly, heterotetramer composed of two small and two large subunits. As to expression, expressed in leaves.

It is found in the plastid. It localises to the chloroplast. Its subcellular location is the amyloplast. The protein localises to the cytoplasm. The protein resides in the cytosol. It catalyses the reaction alpha-D-glucose 1-phosphate + ATP + H(+) = ADP-alpha-D-glucose + diphosphate. It functions in the pathway glycan biosynthesis; starch biosynthesis. Activated by 3'phosphoglycerate, inhibited by orthophosphate. Allosteric regulation. Inhibited by inorganic phosphate (Pi). Its function is as follows. Involved in synthesis of starch. Catalyzes the synthesis of ADP-glucose, a molecule that serves as an activated glycosyl donor for alpha-1,4-glucan synthesis. The chloroplastic isoform 1 is essential for starch synthesis in leaf chloroplasts and the cytosolic isoform 2 for synthesis in seed endosperm. The chain is Glucose-1-phosphate adenylyltransferase small subunit 2, chloroplastic/amyloplastic/cytosolic from Oryza sativa subsp. japonica (Rice).